Reading from the N-terminus, the 729-residue chain is Fibroblast growth factor receptor 2 (729 aa).

The N-terminal stretch at 1–21 (MFSWSYLMGLVMVATATLSLA) is a signal peptide. Residues 22 to 285 (RPSYNIAEDT…ELDSSSEYTE (264 aa)) lie on the Extracellular side of the membrane. A disordered region spans residues 29–62 (EDTTLEPEDANSSGDDEDDNDGSEDFTNDNNHMR). A compositionally biased stretch (acidic residues) spans 31–55 (TTLEPEDANSSGDDEDDNDGSEDFT). N-linked (GlcNAc...) asparagine glycosylation is present at asparagine 39. 2 Ig-like C2-type domains span residues 64–157 (PYWT…YHLD) and 166–268 (PILQ…AWLT). A heparin-binding region spans residues 71-88 (KLEKKLHAVPAANTVKFR). A disulfide bond links cysteine 89 and cysteine 141. 7 N-linked (GlcNAc...) asparagine glycosylation sites follow: asparagine 138, asparagine 151, asparagine 175, asparagine 207, asparagine 228, asparagine 241, and asparagine 256. Cysteine 188 and cysteine 252 are disulfide-bonded. Residues 286 to 306 (IAIYCVGGFLITCMIGTIMVC) traverse the membrane as a helical segment. Residues 307–729 (HMKGRGKKSD…SQHTNGTIKT (423 aa)) are Cytoplasmic-facing. The residue at position 374 (tyrosine 374) is a Phosphotyrosine; by autocatalysis. In terms of domain architecture, Protein kinase spans 389–678 (LTLGKPLGEG…LTQTTNEEYL (290 aa)). Residues 395-403 (LGEGCFGQV), lysine 425, 473-475 (EYA), and asparagine 479 contribute to the ATP site. At tyrosine 494 the chain carries Phosphotyrosine; by autocatalysis. Aspartate 534 serves as the catalytic Proton acceptor. Tyrosine 564, tyrosine 565, and tyrosine 677 each carry phosphotyrosine; by autocatalysis. Residues 683–729 (PLEQYSPSYPDTRSSCSSGDDSVFSPDAMPYDPCLPKSQHTNGTIKT) form a disordered region. Low complexity predominate over residues 693-707 (DTRSSCSSGDDSVFS). Residues 720–729 (SQHTNGTIKT) show a composition bias toward polar residues.

It belongs to the protein kinase superfamily. Tyr protein kinase family. Fibroblast growth factor receptor subfamily. In terms of assembly, monomer. Homodimer after ligand binding. Post-translationally, autophosphorylated. Binding of FGF family members together with heparan sulfate proteoglycan or heparin promotes receptor dimerization and autophosphorylation on tyrosine residues. Autophosphorylation occurs in trans between the two FGFR molecules present in the dimer. N-glycosylated in the endoplasmic reticulum. The N-glycan chains undergo further maturation to an Endo H-resistant form in the Golgi apparatus. In terms of processing, ubiquitinated. FGFR2 is rapidly ubiquitinated after autophosphorylation, leading to internalization and degradation. Subject to degradation both in lysosomes and by the proteasome.

The protein resides in the cell membrane. Its subcellular location is the golgi apparatus. It is found in the cytoplasmic vesicle. It carries out the reaction L-tyrosyl-[protein] + ATP = O-phospho-L-tyrosyl-[protein] + ADP + H(+). Its activity is regulated as follows. Present in an inactive conformation in the absence of bound ligand. Ligand binding leads to dimerization and activation by autophosphorylation on tyrosine residues. Functionally, tyrosine-protein kinase that acts as a cell-surface receptor for fibroblast growth factors and plays an essential role in the regulation of cell proliferation, differentiation, migration and apoptosis, and in the regulation of embryonic development. Required for normal embryonic patterning, limb bud development, lung morphogenesis, osteogenesis and skin development. Plays an essential role in the regulation of osteoblast differentiation, proliferation and apoptosis, and is required for normal skeleton development. Promotes cell proliferation in keratinocytes and immature osteoblasts, but promotes apoptosis in differentiated osteoblasts. Phosphorylates PLCG1, FRS2 and PAK4. Ligand binding leads to the activation of several signaling cascades. Activation of PLCG1 leads to the production of the cellular signaling molecules diacylglycerol and inositol 1,4,5-trisphosphate. Phosphorylation of FRS2 triggers recruitment of GRB2, GAB1, PIK3R1 and SOS1, and mediates activation of RAS, MAPK1/ERK2, MAPK3/ERK1 and the MAP kinase signaling pathway, as well as of the AKT1 signaling pathway. FGFR2 signaling is down-regulated by ubiquitination, internalization and degradation. Mutations that lead to constitutive kinase activation or impair normal FGFR2 maturation, internalization and degradation lead to aberrant signaling. Over-expressed FGFR2 promotes activation of STAT1. This Notophthalmus viridescens (Eastern newt) protein is Fibroblast growth factor receptor 2 (FGFR2).